Here is a 376-residue protein sequence, read N- to C-terminus: 23S rRNA (uracil(747)-C(5))-methyltransferase RlmC (376 aa).

4 residues coordinate [4Fe-4S] cluster: cysteine 3, cysteine 11, cysteine 14, and cysteine 87. The S-adenosyl-L-methionine site is built by glutamine 212, phenylalanine 241, glutamate 262, and asparagine 307. The active-site Nucleophile is the cysteine 334.

It belongs to the class I-like SAM-binding methyltransferase superfamily. RNA M5U methyltransferase family. RlmC subfamily.

The catalysed reaction is uridine(747) in 23S rRNA + S-adenosyl-L-methionine = 5-methyluridine(747) in 23S rRNA + S-adenosyl-L-homocysteine + H(+). Catalyzes the formation of 5-methyl-uridine at position 747 (m5U747) in 23S rRNA. This is 23S rRNA (uracil(747)-C(5))-methyltransferase RlmC from Salmonella typhimurium (strain LT2 / SGSC1412 / ATCC 700720).